The sequence spans 479 residues: FAD-dependent monooxygenase cdmI (479 aa).

The FAD site is built by E43, G57, and R116. 2 N-linked (GlcNAc...) asparagine glycosylation sites follow: N156 and N198. FAD contacts are provided by D315 and A328. The chain crosses the membrane as a helical span at residues 453-473; that stretch reads PFILAVLAGLGFLLTMFKQQW.

This sequence belongs to the paxM FAD-dependent monooxygenase family. The cofactor is FAD.

The protein localises to the membrane. It carries out the reaction verruculide C + AH2 + O2 = verruculide C epoxide + A + H2O. The protein operates within secondary metabolite biosynthesis; terpenoid biosynthesis. In terms of biological role, FAD-dependent monooxygenase; part of the gene cluster that mediates the biosynthesis of chrodrimanin B, a meroterpenoid that acts as a potent blocker of insect GABA-gated chloride channels. The first step of the pathway is the biosynthesis of 6-hydroxymellein by the polyketide synthase cdmE. The prenyltransferase cdmH acts as a 6-hydroxymellein 5-farnesyltransferase and produces the hydrophobic metabolite verruculide C. The FAD-dependent monooxygenase cdmI further converts verruculide C into verruculide B. The terpene cyclase cdmG then produced the pentacyclic molecule 3-hydroxypentacecilide A, the backbone structure of chrodrimanin B, via folding the farnesyl moiety of the substrate into the chair-boat conformation. The short-chain dehydrogenase/reductase cdmF functions as the 3-OH dehydrogenase that oxidizes the C-3 hydroxyl group of 3-hydroxypentacecilide A and produces chrodrimanin C, the dehydrogenated product of 3-hydroxypentacecilide A. The cytochrome P450 monooxygenase cdmJ then accepts both 3-hydroxypentacecilide A and chrodrimanin C and functions as a C-7-beta-hydroxylase to produce respectively chrodrimanin H and chrodrimanin F. The dioxygenase cdmA accepts chrodrimanin H to afford chrodrimanin E, which is further transformed to chrodrimanin A by the dioxygenase cdmD. CdmA can also accept chrodrimanin C as substrate to convert it into verruculide A, which is further converted into chrodrimanin T by cdmD. The last step of the biosynthesis is proposed to be performed by the acetyltransferase cdmC which acetylates chrodrimanin A to yield chrodrimanin B. The pathway may also lead to the production of additional shunt products, including chrodrimanins T and U. This is FAD-dependent monooxygenase cdmI from Talaromyces verruculosus (Penicillium verruculosum).